The primary structure comprises 76 residues: DNA-directed RNA polymerase subunit omega (76 aa).

Belongs to the RNA polymerase subunit omega family. In cyanobacteria the RNAP catalytic core is composed of 2 alpha, 1 beta, 1 beta', 1 gamma and 1 omega subunit. When a sigma factor is associated with the core the holoenzyme is formed, which can initiate transcription.

The enzyme catalyses RNA(n) + a ribonucleoside 5'-triphosphate = RNA(n+1) + diphosphate. Its function is as follows. Promotes RNA polymerase assembly. Latches the N- and C-terminal regions of the beta' subunit thereby facilitating its interaction with the beta and alpha subunits. In Synechococcus elongatus (strain ATCC 33912 / PCC 7942 / FACHB-805) (Anacystis nidulans R2), this protein is DNA-directed RNA polymerase subunit omega.